We begin with the raw amino-acid sequence, 199 residues long: Probable GTP-binding protein EngB (199 aa).

One can recognise an EngB-type G domain in the interval 28 to 199; sequence DLPEIALAGR…ESWDTILEYL (172 aa). GTP-binding positions include 36-43, 63-67, 81-84, 148-151, and 180-182; these read GRSNVGKS, GKTQL, DVPG, TKAD, and FSS. Residues Ser43 and Thr65 each coordinate Mg(2+).

Belongs to the TRAFAC class TrmE-Era-EngA-EngB-Septin-like GTPase superfamily. EngB GTPase family. Requires Mg(2+) as cofactor.

In terms of biological role, necessary for normal cell division and for the maintenance of normal septation. This chain is Probable GTP-binding protein EngB, found in Streptococcus equi subsp. zooepidemicus (strain H70).